We begin with the raw amino-acid sequence, 193 residues long: Nucleoside triphosphate pyrophosphatase (193 aa).

D69 serves as the catalytic Proton acceptor.

The protein belongs to the Maf family. The cofactor is a divalent metal cation.

It is found in the cytoplasm. The catalysed reaction is a ribonucleoside 5'-triphosphate + H2O = a ribonucleoside 5'-phosphate + diphosphate + H(+). The enzyme catalyses a 2'-deoxyribonucleoside 5'-triphosphate + H2O = a 2'-deoxyribonucleoside 5'-phosphate + diphosphate + H(+). In terms of biological role, nucleoside triphosphate pyrophosphatase. May have a dual role in cell division arrest and in preventing the incorporation of modified nucleotides into cellular nucleic acids. The chain is Nucleoside triphosphate pyrophosphatase from Parasynechococcus marenigrum (strain WH8102).